Here is a 223-residue protein sequence, read N- to C-terminus: Coiled-coil domain-containing protein 70 (223 aa).

Residues 129-153 adopt a coiled-coil conformation; it reads NALWERDRNLLQEDKALWEEEKALW. Residues 199 to 223 are disordered; sequence EQRHQNGPYNANEEPQSTSFPRGRA. The segment covering 203-223 has biased composition (polar residues); sequence QNGPYNANEEPQSTSFPRGRA.

This Mus musculus (Mouse) protein is Coiled-coil domain-containing protein 70.